The chain runs to 143 residues: Large ribosomal subunit protein uL11 (143 aa).

This sequence belongs to the universal ribosomal protein uL11 family. Part of the ribosomal stalk of the 50S ribosomal subunit. Interacts with L10 and the large rRNA to form the base of the stalk. L10 forms an elongated spine to which L12 dimers bind in a sequential fashion forming a multimeric L10(L12)X complex. Post-translationally, one or more lysine residues are methylated.

Its function is as follows. Forms part of the ribosomal stalk which helps the ribosome interact with GTP-bound translation factors. This chain is Large ribosomal subunit protein uL11, found in Allorhizobium ampelinum (strain ATCC BAA-846 / DSM 112012 / S4) (Agrobacterium vitis (strain S4)).